The following is a 1700-amino-acid chain: A-kinase anchor protein SPHKAP (1700 aa).

Disordered regions lie at residues Ser364 to Glu385, Ile742 to His778, and Ser793 to Glu885. Residues Ser768–His778 show a composition bias toward low complexity. Residues Asp822 to Lys831 show a composition bias toward polar residues. The span at Ala839–Ala855 shows a compositional bias: basic and acidic residues. The segment covering Ser857–Gln873 has biased composition (polar residues). Residues Phe929–Ala946 form a PKA-RII subunit binding domain region. Residues Lys980–Lys1006 are disordered. 8 positions are modified to phosphoserine: Ser1025, Ser1085, Ser1107, Ser1120, Ser1121, Ser1124, Ser1259, and Ser1288. Disordered regions lie at residues Asp1374–Ile1414, Ile1481–Ser1535, and Gly1585–Pro1604. Residues Pro1383–Pro1398 show a composition bias toward polar residues. A compositionally biased stretch (polar residues) spans Gln1586–Pro1604.

This sequence belongs to the AKAP110 family. Interacts (via the PKA-RII subunit binding domain) with the RI subunit of PKA. Interacts with SPHK1; the interaction greatly reduces SPHK1 activity. In terms of tissue distribution, highly expressed in heart. Both isoforms abundantly expressed in ventricle. Also expressed in spleen, ovary and brain.

The protein resides in the cytoplasm. Anchoring protein that binds preferentially to the type I regulatory subunit of c-AMP-dependent protein kinase (PKA type I) and targets it to distinct subcellular compartments. May act as a converging factor linking cAMP and sphingosine signaling pathways. Plays a regulatory role in the modulation of SPHK1. The chain is A-kinase anchor protein SPHKAP (SPHKAP) from Homo sapiens (Human).